The following is a 461-amino-acid chain: MTAEGGVQYSKIAEIKGPLVIVDDVENAAFDELVEVETKDGERRLGKVLEVGNGKAIVQVFEGTTGLSIAATNAKFVGKVMEMPVSREVLGRVFDGLGRPKDGLPDPIADQFIDINGEPMNPEQREYPKDFIQTGVSVIDGMITLVRGQKLPIFSGSGMSHNLLAAQIARQASVIGTQDDFAVVFAAIGVQYSEAEYFRRSLEESGALKRSVLFLNTADDPAIERIITPRVALTVAEYLAFELGMHVLVILTDMTNYAEALREISAAREEVPGRKGYPGYLYTDLSTIYERAGKLNGKKGSVTQVPILSMPSDDITHPIPDLTGYITEGQIVLGRDLFRQGVYPPVNILMSLSRLMKDGIGEGSTRADHGEISNQVYDAYSRAQEVRALAGIVGKAGLTEIDLKYMDVGDVFENEFLSQATDENRTIEETLGILWKIVSKLPRNEITKIKDKYVDQYYKEE.

This sequence belongs to the ATPase alpha/beta chains family. In terms of assembly, has multiple subunits with at least A(3), B(3), C, D, E, F, H, I and proteolipid K(x).

It is found in the cell membrane. Component of the A-type ATP synthase that produces ATP from ADP in the presence of a proton gradient across the membrane. The B chain is a regulatory subunit. The chain is A-type ATP synthase subunit B from Nitrosopumilus maritimus (strain SCM1).